Here is a 282-residue protein sequence, read N- to C-terminus: Acetyl-coenzyme A carboxylase carboxyl transferase subunit beta (282 aa).

In terms of domain architecture, CoA carboxyltransferase N-terminal spans 29–282 (LPINCPSCSA…LSSLLGLHQG (254 aa)). Residues C33, C36, C52, and C55 each contribute to the Zn(2+) site. The C4-type zinc-finger motif lies at 33–55 (CPSCSARIAAEALQRNLKVCPKC).

This sequence belongs to the AccD/PCCB family. As to quaternary structure, acetyl-CoA carboxylase is a heterohexamer composed of biotin carboxyl carrier protein (AccB), biotin carboxylase (AccC) and two subunits each of ACCase subunit alpha (AccA) and ACCase subunit beta (AccD). It depends on Zn(2+) as a cofactor.

The protein resides in the cytoplasm. It catalyses the reaction N(6)-carboxybiotinyl-L-lysyl-[protein] + acetyl-CoA = N(6)-biotinyl-L-lysyl-[protein] + malonyl-CoA. It participates in lipid metabolism; malonyl-CoA biosynthesis; malonyl-CoA from acetyl-CoA: step 1/1. In terms of biological role, component of the acetyl coenzyme A carboxylase (ACC) complex. Biotin carboxylase (BC) catalyzes the carboxylation of biotin on its carrier protein (BCCP) and then the CO(2) group is transferred by the transcarboxylase to acetyl-CoA to form malonyl-CoA. The polypeptide is Acetyl-coenzyme A carboxylase carboxyl transferase subunit beta (Syntrophomonas wolfei subsp. wolfei (strain DSM 2245B / Goettingen)).